The sequence spans 338 residues: MIERNWNELIRPEKPQIETGADATRKARIVAEPLERGFGVTLGNALRRVLLSSLQGAAVTAIQIDGVVHEFSSLEGVREDVVDIVLNIKQLAVRMHAEGPKRMTLRATGPGVVTAGQIETPSDIEILNPDHVLCTLDDGASVRMEFTVNTGKGYVPADKNRPEDAPIGLIAVDALYSPVKRVAYRVEPTRQGQSLDYDKLILEVETNGAVTPVDAVAYAARILQDQLQIFITFEEPKAKTADEAKPELPFNPALLKKVDELELSVRSANCLKNDNIVYIGDLIQKTEAEMLRTPNFGRKSLNEIKEVLAGMGLHLGMDVPNWPPENIEDLAKKFEDQI.

The tract at residues 1-234 is alpha N-terminal domain (alpha-NTD); it reads MIERNWNELI…DQLQIFITFE (234 aa). The interval 250–338 is alpha C-terminal domain (alpha-CTD); that stretch reads FNPALLKKVD…DLAKKFEDQI (89 aa).

This sequence belongs to the RNA polymerase alpha chain family. As to quaternary structure, homodimer. The RNAP catalytic core consists of 2 alpha, 1 beta, 1 beta' and 1 omega subunit. When a sigma factor is associated with the core the holoenzyme is formed, which can initiate transcription.

The enzyme catalyses RNA(n) + a ribonucleoside 5'-triphosphate = RNA(n+1) + diphosphate. Functionally, DNA-dependent RNA polymerase catalyzes the transcription of DNA into RNA using the four ribonucleoside triphosphates as substrates. The protein is DNA-directed RNA polymerase subunit alpha of Caulobacter sp. (strain K31).